Here is a 179-residue protein sequence, read N- to C-terminus: Translation initiation factor IF-3 (179 aa).

This sequence belongs to the IF-3 family. In terms of assembly, monomer.

Its subcellular location is the cytoplasm. Functionally, IF-3 binds to the 30S ribosomal subunit and shifts the equilibrium between 70S ribosomes and their 50S and 30S subunits in favor of the free subunits, thus enhancing the availability of 30S subunits on which protein synthesis initiation begins. The polypeptide is Translation initiation factor IF-3 (Bradyrhizobium diazoefficiens (strain JCM 10833 / BCRC 13528 / IAM 13628 / NBRC 14792 / USDA 110)).